A 161-amino-acid polypeptide reads, in one-letter code: MKLSDIADNAGSRKKRMRIGRGIGSGKGKTGGRGGKGQTARSGVRIKGFEGGQMPLHRRLPKRGFNNIFRVEFAEINLDRLQDAIDAGSIDAKSTVNAESLVKSGVVRRAKGGVRLLGRGEIKAKLTIEVHGASKSAIAAVEKAGGTVKILAPKKDEGEAA.

A disordered region spans residues 1 to 43; it reads MKLSDIADNAGSRKKRMRIGRGIGSGKGKTGGRGGKGQTARSG. Over residues 21 to 37 the composition is skewed to gly residues; the sequence is RGIGSGKGKTGGRGGKG.

This sequence belongs to the universal ribosomal protein uL15 family. Part of the 50S ribosomal subunit.

Binds to the 23S rRNA. This Nitrobacter hamburgensis (strain DSM 10229 / NCIMB 13809 / X14) protein is Large ribosomal subunit protein uL15.